The primary structure comprises 617 residues: NADPH-dependent diflavin oxidoreductase 1 (617 aa).

The region spanning 3–147 is the Flavodoxin-like domain; the sequence is PMILYASETG…AFLPWLQQTL (145 aa). FMN contacts are provided by residues 9–14, 56–59, 94–103, and glutamate 129; these read SETGNA, STHG, and LGDSSYERFC. The region spanning 226–465 is the FAD-binding FR-type domain; it reads DDWVWATLKK…HIASPTLFLP (240 aa). FAD is bound by residues 404 to 407 and 438 to 441; these read RQFS and GLCS. Residues threonine 479, 534 to 535, and 540 to 544 each bind NADP(+); these read SR and RIYVQ. FAD is bound at residue tryptophan 617.

It belongs to the NADPH-dependent diflavin oxidoreductase NDOR1 family. This sequence in the N-terminal section; belongs to the flavodoxin family. In the C-terminal section; belongs to the flavoprotein pyridine nucleotide cytochrome reductase family. As to quaternary structure, interacts with DRE2; as part of the cytosolic iron-sulfur (Fe-S) protein assembly (CIA) machinery. Requires FAD as cofactor. FMN is required as a cofactor.

Its subcellular location is the cytoplasm. The protein localises to the mitochondrion. It catalyses the reaction 2 oxidized [2Fe-2S]-[protein] + NADPH = 2 reduced [2Fe-2S]-[protein] + NADP(+) + H(+). NADPH-dependent reductase which is a central component of the cytosolic iron-sulfur (Fe-S) protein assembly (CIA) machinery. Transfers electrons from NADPH via its FAD and FMN prosthetic groups to the [2Fe-2S] cluster of DRE2, another key component of the CIA machinery. In turn, this reduced cluster provides electrons for assembly of cytosolic iron-sulfur cluster proteins. Positively controls H(2)O(2)-induced cell death. This is NADPH-dependent diflavin oxidoreductase 1 from Cryptococcus neoformans var. neoformans serotype D (strain B-3501A) (Filobasidiella neoformans).